The following is a 401-amino-acid chain: ATP phosphoribosyltransferase regulatory subunit (401 aa).

It belongs to the class-II aminoacyl-tRNA synthetase family. HisZ subfamily. As to quaternary structure, heteromultimer composed of HisG and HisZ subunits.

The protein localises to the cytoplasm. Its pathway is amino-acid biosynthesis; L-histidine biosynthesis; L-histidine from 5-phospho-alpha-D-ribose 1-diphosphate: step 1/9. Its function is as follows. Required for the first step of histidine biosynthesis. May allow the feedback regulation of ATP phosphoribosyltransferase activity by histidine. The polypeptide is ATP phosphoribosyltransferase regulatory subunit (Desulforamulus reducens (strain ATCC BAA-1160 / DSM 100696 / MI-1) (Desulfotomaculum reducens)).